We begin with the raw amino-acid sequence, 546 residues long: MTTNYIFVTGGVVSSLGKGIAAASLAAILEARGLKVTMMKLDPYINVDPGTMSPTQHGEVFVTEDGAETDLDLGHYERFIRTKMTKRNNFTAGRVYADVLRKERRGDYLGATIQVIPHITNAIKDRVIAGSEGHDVAIVEVGGTVGDIESLPFMEAIRQLAVELGRERAMFMHLTLVPYLAAAGEVKTKPTQHSVKELLSIGIQPDILVCRSDRMIPANERKKIALFCNVQEKAVISMKDVDSIYKIPQLVKSQGLDDLVCARFGINAPEADLSEWEQVIYEEANPTGEVTIGMVGKYIELPDAYKSVNEALKHAGLKNRLNVTIKYVDSQDVETKGVEVLEGLDAILVPGGFGDRGIEGKIRAAQYARENKVPYLGICLGMQVALIEYARNVAGMEGAHSTEFNKDTKYPVVGLITEWVDGEGKVEERTETSDLGGTMRLGSQLCHLEKGTKARELYGNATIHERHRHRYEVNNNLRPQIEKAGLKVSGLSADKKLVEMIENPAHPWFVAAQFHPEFTSTPRDGHPLFAGFVKAAGQNARGEFEK.

Positions 1–266 (MTTNYIFVTG…DDLVCARFGI (266 aa)) are amidoligase domain. CTP is bound at residue S14. S14 is a UTP binding site. Residues 15-20 (SLGKGI) and D72 contribute to the ATP site. Mg(2+)-binding residues include D72 and E140. Residues 147–149 (DIE), 187–192 (KTKPTQ), and K223 contribute to the CTP site. UTP is bound by residues 187–192 (KTKPTQ) and K223. Position 239–241 (239–241 (KDV)) interacts with ATP. The Glutamine amidotransferase type-1 domain maps to 291-542 (TIGMVGKYIE…VKAAGQNARG (252 aa)). G352 contacts L-glutamine. C379 serves as the catalytic Nucleophile; for glutamine hydrolysis. Residues 380-383 (LGMQ), E403, and R470 contribute to the L-glutamine site. Residues H515 and E517 contribute to the active site.

Belongs to the CTP synthase family. In terms of assembly, homotetramer.

It catalyses the reaction UTP + L-glutamine + ATP + H2O = CTP + L-glutamate + ADP + phosphate + 2 H(+). It carries out the reaction L-glutamine + H2O = L-glutamate + NH4(+). The enzyme catalyses UTP + NH4(+) + ATP = CTP + ADP + phosphate + 2 H(+). Its pathway is pyrimidine metabolism; CTP biosynthesis via de novo pathway; CTP from UDP: step 2/2. Its activity is regulated as follows. Allosterically activated by GTP, when glutamine is the substrate; GTP has no effect on the reaction when ammonia is the substrate. The allosteric effector GTP functions by stabilizing the protein conformation that binds the tetrahedral intermediate(s) formed during glutamine hydrolysis. Inhibited by the product CTP, via allosteric rather than competitive inhibition. Functionally, catalyzes the ATP-dependent amination of UTP to CTP with either L-glutamine or ammonia as the source of nitrogen. Regulates intracellular CTP levels through interactions with the four ribonucleotide triphosphates. In Vibrio campbellii (strain ATCC BAA-1116), this protein is CTP synthase.